We begin with the raw amino-acid sequence, 904 residues long: Nitrate reductase [NADH] 2 (904 aa).

Polar residues-rich tracts occupy residues 1–10 (MAASVENRQF) and 35–50 (PSPN…NSTI). A disordered region spans residues 1-65 (MAASVENRQF…SSEDDDDDDE (65 aa)). Positions 56 to 65 (SSEDDDDDDE) are enriched in acidic residues. A Mo-molybdopterin-binding site is contributed by Cys-183. Residues 531–606 (SKMYSMSEVR…LEDFRIGELI (76 aa)) enclose the Cytochrome b5 heme-binding domain. The heme site is built by His-566 and His-589. Positions 647–759 (REKIPCKLID…KGPLGHIEYQ (113 aa)) constitute an FAD-binding FR-type domain. Residues 699-702 (RAYT), 716-720 (VVKIY), Phe-721, Phe-728, 733-735 (QMS), and Thr-786 contribute to the FAD site.

The protein belongs to the nitrate reductase family. In terms of assembly, homodimer. Requires FAD as cofactor. Heme serves as cofactor. It depends on Mo-molybdopterin as a cofactor.

The enzyme catalyses nitrite + NAD(+) + H2O = nitrate + NADH + H(+). Its activity is regulated as follows. Regulated by the nitrogen source and controlled by the circadian rhythm. Its function is as follows. Nitrate reductase is a key enzyme involved in the first step of nitrate assimilation in plants, fungi and bacteria. This Nicotiana tabacum (Common tobacco) protein is Nitrate reductase [NADH] 2 (NIA2).